The sequence spans 337 residues: Carbonic anhydrase 14 (337 aa).

A signal peptide spans 1–15 (MLFSALLLEVIWILA). Residues 16 to 290 (ADGGQHWTYE…AGSSYTTGEM (275 aa)) lie on the Extracellular side of the membrane. The Alpha-carbonic anhydrase domain maps to 20–278 (QHWTYEGPHG…LNQRMVFASF (259 aa)). The cysteines at positions 40 and 221 are disulfide-linked. The Proton donor/acceptor role is filled by H84. Zn(2+) contacts are provided by H109, H111, and H135. N-linked (GlcNAc...) asparagine glycosylation is present at N213. Position 217–218 (217–218 (TT)) interacts with substrate. Residues 291-311 (LSLGVGILVGCLCLLLAVYFI) form a helical membrane-spanning segment. Residues 312 to 337 (ARKIRKKRLENRKSVVFTSAQATTEA) are Cytoplasmic-facing. S325 carries the post-translational modification Phosphoserine.

This sequence belongs to the alpha-carbonic anhydrase family. Zn(2+) is required as a cofactor. In terms of tissue distribution, high expression in all parts of the central nervous system and lower expression in adult liver, heart, small intestine, colon, kidney, urinary bladder and skeletal muscle.

The protein resides in the membrane. It catalyses the reaction hydrogencarbonate + H(+) = CO2 + H2O. With respect to regulation, activated by histamine, L-adrenaline, L- and D-histidine, and L- and D-phenylalanine. Inhibited by coumarins, saccharin, sulfonamide derivatives such as acetazolamide (AZA) and Foscarnet (phosphonoformate trisodium salt). In terms of biological role, reversible hydration of carbon dioxide. This chain is Carbonic anhydrase 14 (CA14), found in Homo sapiens (Human).